Consider the following 160-residue polypeptide: Deoxyuridine 5'-triphosphate nucleotidohydrolase (160 aa).

Substrate contacts are provided by residues 79–81 (RSG), N92, 96–98 (TVD), and K106.

The protein belongs to the dUTPase family. Requires Mg(2+) as cofactor.

The enzyme catalyses dUTP + H2O = dUMP + diphosphate + H(+). It functions in the pathway pyrimidine metabolism; dUMP biosynthesis; dUMP from dCTP (dUTP route): step 2/2. Functionally, this enzyme is involved in nucleotide metabolism: it produces dUMP, the immediate precursor of thymidine nucleotides and it decreases the intracellular concentration of dUTP so that uracil cannot be incorporated into DNA. The chain is Deoxyuridine 5'-triphosphate nucleotidohydrolase from Rhizobium meliloti (strain 1021) (Ensifer meliloti).